We begin with the raw amino-acid sequence, 443 residues long: Xaa-Pro dipeptidase (443 aa).

Mn(2+) contacts are provided by aspartate 246, aspartate 257, histidine 339, glutamate 384, and glutamate 423.

This sequence belongs to the peptidase M24B family. Bacterial-type prolidase subfamily. Mn(2+) serves as cofactor.

The enzyme catalyses Xaa-L-Pro dipeptide + H2O = an L-alpha-amino acid + L-proline. Functionally, splits dipeptides with a prolyl residue in the C-terminal position. This is Xaa-Pro dipeptidase from Serratia proteamaculans (strain 568).